The sequence spans 534 residues: Lysophosphatidylcholine acyltransferase 1 (534 aa).

The segment at 1 to 22 is disordered; that stretch reads MRLRGCGPRAAPASSAGASDAR. The Cytoplasmic portion of the chain corresponds to 1–57; sequence MRLRGCGPRAAPASSAGASDARLLAPPGRNPFVHELRLSALQKAQVALMTLTLFPVR. Residues 7–22 show a composition bias toward low complexity; that stretch reads GPRAAPASSAGASDAR. A helical; Signal-anchor for type II membrane protein transmembrane segment spans residues 58 to 78; it reads LLVAAAMMLLAWPLALVASLG. Over 79–534 the chain is Lumenal; it reads SAEKEPEQPP…GRKPVRKKLD (456 aa). The HXXXXD motif motif lies at 135 to 140; that stretch reads HSSYFD. EF-hand domains follow at residues 379–414 and 451–486; these read PVSDLLEDMFSLFDESGSGEVDLRECVVALSVVCRP and VAELTVTDLFRAIDQEEKGKITFADFHRFAEMYPAF. 5 residues coordinate Ca(2+): aspartate 392, serine 394, serine 396, glutamate 398, and glutamate 403. The disordered stretch occupies residues 512-534; sequence GFCADFSPENSDAGRKPVRKKLD. Residues 523–534 show a composition bias toward basic and acidic residues; sequence DAGRKPVRKKLD. A Di-lysine motif motif is present at residues 531 to 534; that stretch reads KKLD.

It belongs to the 1-acyl-sn-glycerol-3-phosphate acyltransferase family. Erythrocytes.

It is found in the endoplasmic reticulum membrane. Its subcellular location is the golgi apparatus membrane. It localises to the cell membrane. The protein localises to the lipid droplet. It carries out the reaction a 1-acyl-sn-glycero-3-phosphocholine + an acyl-CoA = a 1,2-diacyl-sn-glycero-3-phosphocholine + CoA. It catalyses the reaction a 1-acyl-sn-glycero-3-phosphate + an acyl-CoA = a 1,2-diacyl-sn-glycero-3-phosphate + CoA. The enzyme catalyses a 1-O-alkyl-sn-glycero-3-phosphocholine + acetyl-CoA = a 1-O-alkyl-2-acetyl-sn-glycero-3-phosphocholine + CoA. The catalysed reaction is a 1-O-(1Z-alkenyl)-sn-glycero-3-phosphocholine + an acyl-CoA = a 1-O-(1Z-alkenyl)-2-acyl-sn-glycero-3-phosphocholine + CoA. It carries out the reaction 1-acyl-sn-glycero-3-phospho-(1'-sn-glycerol) + an acyl-CoA = a 1,2-diacyl-sn-glycero-3-phospho-(1'-sn-glycerol) + CoA. It catalyses the reaction 1-hexadecanoyl-sn-glycero-3-phosphocholine + (9Z)-octadecenoyl-CoA = 1-hexadecanoyl-2-(9Z-octadecenoyl)-sn-glycero-3-phosphocholine + CoA. The enzyme catalyses 1-hexadecanoyl-sn-glycero-3-phosphocholine + hexadecanoyl-CoA = 1,2-dihexadecanoyl-sn-glycero-3-phosphocholine + CoA. The catalysed reaction is 1-O-hexadecyl-sn-glycero-3-phosphocholine + hexadecanoyl-CoA = 1-O-hexadecyl-2-hexadecanoyl-sn-glycero-3-phosphocholine + CoA. It carries out the reaction a 1-O-(1Z-alkenyl)-sn-glycero-3-phosphocholine + hexadecanoyl-CoA = 1-O-(1Z)-alkenyl-2-hexadecanoyl-sn-glycero-3-phosphocholine + CoA. It catalyses the reaction 1-hexadecanoyl-sn-glycero-3-phospho-(1'-sn-glycerol) + hexadecanoyl-CoA = 1,2-dihexadecanoyl-sn-glycero-3-phospho-(1'-sn-glycerol) + CoA. The enzyme catalyses 1-dodecanoyl-sn-glycero-3-phosphocholine + hexadecanoyl-CoA = 1-dodecanoyl-2-hexadecanoyl-sn-glycero-3-phosphocholine + CoA. The catalysed reaction is 1-tetradecanoyl-sn-glycero-3-phosphocholine + hexadecanoyl-CoA = 1-tetradecanoyl-2-hexadecanoyl-sn-glycero-3-phosphocholine + CoA. It carries out the reaction 1-O-octadecyl-sn-glycero-3-phosphocholine + hexadecanoyl-CoA = 1-O-octadecyl-2-hexadecanoyl-sn-glycero-3-phosphocholine + CoA. It catalyses the reaction 1-octadecanoyl-sn-glycero-3-phosphocholine + hexadecanoyl-CoA = 1-octadecanoyl-2-hexadecanoyl-sn-glycero-3-phosphocholine + CoA. The enzyme catalyses 1-(9Z-octadecenoyl)-sn-glycero-3-phosphocholine + hexadecanoyl-CoA = 1-(9Z-octadecenoyl)-2-hexadecanoyl-sn-glycero-3-phosphocholine + CoA. The catalysed reaction is 1-eicosanoyl-sn-glycero-3-phosphocholine + hexadecanoyl-CoA = 1-eicosanoyl-2-hexadecanoyl-sn-glycero-3-phosphocholine + CoA. It carries out the reaction hexanoyl-CoA + 1-hexadecanoyl-sn-glycero-3-phosphocholine = 1-hexadecanoyl-2-hexanoyl-sn-glycero-3-phosphocholine + CoA. It catalyses the reaction octanoyl-CoA + 1-hexadecanoyl-sn-glycero-3-phosphocholine = 1-hexadecanoyl-2-octanoyl-sn-glycero-3-phosphocholine + CoA. The enzyme catalyses decanoyl-CoA + 1-hexadecanoyl-sn-glycero-3-phosphocholine = 1-hexadecanoyl-2-decanoyl-sn-glycero-3-phosphocholine + CoA. The catalysed reaction is dodecanoyl-CoA + 1-hexadecanoyl-sn-glycero-3-phosphocholine = 1-hexadecanoyl-2-dodecanoyl-sn-glycero-3-phosphocholine + CoA. It carries out the reaction tetradecanoyl-CoA + 1-hexadecanoyl-sn-glycero-3-phosphocholine = 1-hexadecanoyl-2-tetradecanoyl-sn-glycero-3-phosphocholine + CoA. It catalyses the reaction (9Z,12Z)-octadecadienoyl-CoA + 1-hexadecanoyl-sn-glycero-3-phosphocholine = 1-hexadecanoyl-2-(9Z,12Z-octadecadienoyl)-sn-glycero-3-phosphocholine + CoA. The enzyme catalyses (4Z,7Z,10Z,13Z,16Z,19Z)-docosahexaenoyl-CoA + 1-hexadecanoyl-sn-glycero-3-phosphocholine = 1-hexadecanoyl-2-(4Z,7Z,10Z,13Z,16Z,19Z-docosahexaenoyl)-sn-glycero-3-phosphocholine + CoA. The catalysed reaction is 1-hexadecanoyl-sn-glycero-3-phosphocholine + acetyl-CoA = 1-hexadecanoyl-2-acetyl-sn-glycero-3-phosphocholine + CoA. It carries out the reaction eicosanoyl-CoA + 1-hexadecanoyl-sn-glycero-3-phosphocholine = 1-hexadecanoyl-2-eicosanoyl-sn-glycero-3-phosphocholine + CoA. It catalyses the reaction 1-O-hexadecyl-sn-glycero-3-phosphocholine + acetyl-CoA = 1-O-hexadecyl-2-acetyl-sn-glycero-3-phosphocholine + CoA. The enzyme catalyses a 1-acyl-sn-glycero-3-phosphocholine + hexadecanoyl-CoA = 1-acyl-2-hexadecanoyl-sn-glycero-3-phosphocholine + CoA. The catalysed reaction is a 1-acyl-sn-glycero-3-phosphate + hexadecanoyl-CoA = 1-acyl-2-hexadecanoyl-sn-glycero-3-phosphate + CoA. It carries out the reaction 1-acyl-sn-glycero-3-phospho-(1'-sn-glycerol) + hexadecanoyl-CoA = 1-acyl-2-hexadecanoyl-sn-glycero-3-phospho-(1'-sn-glycerol) + CoA. It functions in the pathway lipid metabolism; phospholipid metabolism. Its function is as follows. Exhibits acyltransferase activity. Exhibits acetyltransferase activity. Activity is calcium-independent. Catalyzes the conversion of lysophosphatidylcholine (1-acyl-sn-glycero-3-phosphocholine or LPC) into phosphatidylcholine (1,2-diacyl-sn-glycero-3-phosphocholine or PC). Catalyzes the conversion 1-acyl-sn-glycerol-3-phosphate (lysophosphatidic acid or LPA) into 1,2-diacyl-sn-glycerol-3-phosphate (phosphatidic acid or PA) by incorporating an acyl moiety at the sn-2 position of the glycerol backbone. Displays a clear preference for saturated fatty acyl-CoAs, and 1-myristoyl or 1-palmitoyl LPC as acyl donors and acceptors, respectively. Involved in platelet-activating factor (PAF) biosynthesis by catalyzing the conversion of the PAF precursor, 1-O-alkyl-sn-glycero-3-phosphocholine (lyso-PAF) into 1-O-alkyl-2-acetyl-sn-glycero-3-phosphocholine (PAF). May synthesize phosphatidylcholine in pulmonary surfactant, thereby playing a pivotal role in respiratory physiology. Involved in the regulation of lipid droplet number and size. The sequence is that of Lysophosphatidylcholine acyltransferase 1 (LPCAT1) from Homo sapiens (Human).